We begin with the raw amino-acid sequence, 378 residues long: Small RNA 2'-O-methyltransferase (378 aa).

Asp-61 provides a ligand contact to S-adenosyl-L-methionine. Residues Glu-114, Glu-117, His-118, and His-176 each coordinate Mg(2+).

It belongs to the methyltransferase superfamily. HEN1 family. It depends on Mg(2+) as a cofactor.

Its subcellular location is the cytoplasm. It catalyses the reaction small RNA 3'-end nucleotide + S-adenosyl-L-methionine = small RNA 3'-end 2'-O-methylnucleotide + S-adenosyl-L-homocysteine + H(+). Its function is as follows. Methyltransferase that adds a 2'-O-methyl group at the 3'-end of small RNAs. In Schizosaccharomyces pombe (strain 972 / ATCC 24843) (Fission yeast), this protein is Small RNA 2'-O-methyltransferase.